The sequence spans 341 residues: Ribosomal RNA small subunit methyltransferase H (341 aa).

Residues 47-49 (GGY), D64, F91, D109, and Q116 contribute to the S-adenosyl-L-methionine site.

This sequence belongs to the methyltransferase superfamily. RsmH family.

The protein localises to the cytoplasm. The catalysed reaction is cytidine(1402) in 16S rRNA + S-adenosyl-L-methionine = N(4)-methylcytidine(1402) in 16S rRNA + S-adenosyl-L-homocysteine + H(+). Functionally, specifically methylates the N4 position of cytidine in position 1402 (C1402) of 16S rRNA. This chain is Ribosomal RNA small subunit methyltransferase H, found in Rhizobium leguminosarum bv. trifolii (strain WSM1325).